The sequence spans 416 residues: Serine hydroxymethyltransferase 1 (416 aa).

Residues Leu121 and 125–127 contribute to the (6S)-5,6,7,8-tetrahydrofolate site; that span reads GHL. Lys229 carries the post-translational modification N6-(pyridoxal phosphate)lysine. (6S)-5,6,7,8-tetrahydrofolate contacts are provided by residues Glu245 and 354-356; that span reads SPF.

It belongs to the SHMT family. In terms of assembly, homodimer. Pyridoxal 5'-phosphate is required as a cofactor.

Its subcellular location is the cytoplasm. It catalyses the reaction (6R)-5,10-methylene-5,6,7,8-tetrahydrofolate + glycine + H2O = (6S)-5,6,7,8-tetrahydrofolate + L-serine. It participates in one-carbon metabolism; tetrahydrofolate interconversion. It functions in the pathway amino-acid biosynthesis; glycine biosynthesis; glycine from L-serine: step 1/1. Catalyzes the reversible interconversion of serine and glycine with tetrahydrofolate (THF) serving as the one-carbon carrier. This reaction serves as the major source of one-carbon groups required for the biosynthesis of purines, thymidylate, methionine, and other important biomolecules. Also exhibits THF-independent aldolase activity toward beta-hydroxyamino acids, producing glycine and aldehydes, via a retro-aldol mechanism. The chain is Serine hydroxymethyltransferase 1 from Vibrio parahaemolyticus serotype O3:K6 (strain RIMD 2210633).